A 283-amino-acid chain; its full sequence is ATP phosphoribosyltransferase (283 aa).

The protein belongs to the ATP phosphoribosyltransferase family. Long subfamily. The cofactor is Mg(2+).

It is found in the cytoplasm. It carries out the reaction 1-(5-phospho-beta-D-ribosyl)-ATP + diphosphate = 5-phospho-alpha-D-ribose 1-diphosphate + ATP. The protein operates within amino-acid biosynthesis; L-histidine biosynthesis; L-histidine from 5-phospho-alpha-D-ribose 1-diphosphate: step 1/9. Feedback inhibited by histidine. Functionally, catalyzes the condensation of ATP and 5-phosphoribose 1-diphosphate to form N'-(5'-phosphoribosyl)-ATP (PR-ATP). Has a crucial role in the pathway because the rate of histidine biosynthesis seems to be controlled primarily by regulation of HisG enzymatic activity. The protein is ATP phosphoribosyltransferase of Rhodococcus jostii (strain RHA1).